Here is a 471-residue protein sequence, read N- to C-terminus: Tyrosine--tRNA ligase, mitochondrial (471 aa).

Residue Tyr-71 coordinates L-tyrosine. Asp-75 serves as a coordination point for ATP. Positions 76 to 85 (PTGDSLHVGH) match the 'HIGH' region motif. L-tyrosine-binding residues include Asp-115, Tyr-215, Gln-219, Asp-222, and Gln-241. Residues Ile-268 and Lys-278 each coordinate ATP. Residues 275-279 (KLGKS) carry the 'KMSKS' region motif. An N6-acetyllysine mark is found at Lys-349 and Lys-361.

It belongs to the class-I aminoacyl-tRNA synthetase family. In terms of assembly, homodimer.

The protein resides in the mitochondrion matrix. It catalyses the reaction tRNA(Tyr) + L-tyrosine + ATP = L-tyrosyl-tRNA(Tyr) + AMP + diphosphate + H(+). In terms of biological role, catalyzes the attachment of tyrosine to tRNA(Tyr) in a two-step reaction: tyrosine is first activated by ATP to form Tyr-AMP and then transferred to the acceptor end of tRNA(Tyr). The sequence is that of Tyrosine--tRNA ligase, mitochondrial (Yars2) from Rattus norvegicus (Rat).